Reading from the N-terminus, the 334-residue chain is Ornithine carbamoyltransferase (334 aa).

Carbamoyl phosphate contacts are provided by residues 57–60 (STRT), Gln84, Arg108, and 135–138 (HPTQ). L-ornithine is bound by residues Asn169, Asp233, and 237–238 (SM). Residues 275–276 (CL) and Arg320 contribute to the carbamoyl phosphate site.

It belongs to the aspartate/ornithine carbamoyltransferase superfamily. OTCase family.

It is found in the cytoplasm. It carries out the reaction carbamoyl phosphate + L-ornithine = L-citrulline + phosphate + H(+). Its pathway is amino-acid biosynthesis; L-arginine biosynthesis; L-arginine from L-ornithine and carbamoyl phosphate: step 1/3. Its function is as follows. Reversibly catalyzes the transfer of the carbamoyl group from carbamoyl phosphate (CP) to the N(epsilon) atom of ornithine (ORN) to produce L-citrulline. This chain is Ornithine carbamoyltransferase, found in Vibrio vulnificus (strain YJ016).